Consider the following 129-residue polypeptide: Thylakoid-associated single-stranded DNA-binding protein slr1034 (129 aa).

Positions 1–100 (MNSFVLMATV…LTASRISLVD (100 aa)) constitute an SSB domain. The tract at residues 99–129 (VDSGNGINPGELSSPPEPEAVDLSNTDDIPF) is disordered.

In terms of assembly, homotetramer.

The protein resides in the cellular thylakoid membrane. In Synechocystis sp. (strain ATCC 27184 / PCC 6803 / Kazusa), this protein is Thylakoid-associated single-stranded DNA-binding protein slr1034.